The primary structure comprises 394 residues: Formate-dependent phosphoribosylglycinamide formyltransferase (394 aa).

Residues 22 to 23 (EL) and Glu82 contribute to the N(1)-(5-phospho-beta-D-ribosyl)glycinamide site. ATP-binding positions include Arg114, Lys155, 160–165 (SSGKGQ), 195–198 (EGFV), and Glu203. In terms of domain architecture, ATP-grasp spans 119–308 (RLAAETLKLP…EFALHVRAIL (190 aa)). Mg(2+) contacts are provided by Glu267 and Glu279. N(1)-(5-phospho-beta-D-ribosyl)glycinamide contacts are provided by residues Asp286, Lys357, and 364–365 (RR).

The protein belongs to the PurK/PurT family. Homodimer.

It catalyses the reaction N(1)-(5-phospho-beta-D-ribosyl)glycinamide + formate + ATP = N(2)-formyl-N(1)-(5-phospho-beta-D-ribosyl)glycinamide + ADP + phosphate + H(+). It participates in purine metabolism; IMP biosynthesis via de novo pathway; N(2)-formyl-N(1)-(5-phospho-D-ribosyl)glycinamide from N(1)-(5-phospho-D-ribosyl)glycinamide (formate route): step 1/1. Its function is as follows. Involved in the de novo purine biosynthesis. Catalyzes the transfer of formate to 5-phospho-ribosyl-glycinamide (GAR), producing 5-phospho-ribosyl-N-formylglycinamide (FGAR). Formate is provided by PurU via hydrolysis of 10-formyl-tetrahydrofolate. This Tolumonas auensis (strain DSM 9187 / NBRC 110442 / TA 4) protein is Formate-dependent phosphoribosylglycinamide formyltransferase.